The following is a 1959-amino-acid chain: Myosin-9 (1959 aa).

The Myosin N-terminal SH3-like domain occupies 27–77; the sequence is AAKKLVWVPSEKSGFEAASLKEEVGDEAIVELAENGKKVKVNKDDIQKMNP. The Myosin motor domain occupies 81-776; it reads SKVEDMAELT…VLAHLEEERD (696 aa). Residue 174-181 coordinates ATP; it reads GESGAGKT. The tract at residues 654 to 676 is actin-binding; that stretch reads LAKLMATLRNTNPNFVRCIIPNH. In terms of domain architecture, IQ spans 779-808; sequence ITDVIIGFQACCRGYLARKAFAKRQQQLTA. Residues 837-1925 adopt a coiled-coil conformation; sequence LLQVSRQEEE…LKSKLRRGDL (1089 aa). 4 disordered regions span residues 1118 to 1168, 1694 to 1717, 1879 to 1917, and 1936 to 1959; these read EDLE…REQE, RAKRQAQQERDELADEIANSSGKG, LEEAEEEAQRANVRRKLQRELDDATETADAMNREVSSLK, and KGTGECSDEEVDGKAEAGDAKATE. Composition is skewed to basic and acidic residues over residues 1122-1148 and 1694-1704; these read SERASRNKAEKQKRDLGEELEALKTEL and RAKRQAQQERD. A compositionally biased stretch (basic and acidic residues) spans 1947 to 1959; that stretch reads DGKAEAGDAKATE.

This sequence belongs to the TRAFAC class myosin-kinesin ATPase superfamily. Myosin family. As to quaternary structure, myosin is a hexameric protein that consists of 2 heavy chain subunits (MHC), 2 alkali light chain subunits (MLC) and 2 regulatory light chain subunits (MLC-2). As to expression, expressed in fibroblasts, brain, lung, kidney, spleen, and skeletal, cardiac and smooth muscles.

The protein resides in the cytoplasm. It localises to the cytoskeleton. The protein localises to the cell cortex. Its subcellular location is the cytoplasmic vesicle. It is found in the secretory vesicle. The protein resides in the cortical granule. Functionally, cellular myosin that appears to play a role in cytokinesis, cell shape, and specialized functions such as secretion and capping. The chain is Myosin-9 (MYH9) from Gallus gallus (Chicken).